Consider the following 1871-residue polypeptide: Girdin (1871 aa).

The Calponin-homology (CH) domain occupies 12–132 (QFMTSPLVTW…KLLLLLLGCA (121 aa)). Positions 196 to 425 (HLKRLIDERD…EMAQKQSMDE (230 aa)) form a coiled coil. Phosphoserine occurs at positions 233, 237, and 449. The stretch at 458–1385 (TSSRLLKLEM…KIMDQYKFYD (928 aa)) forms a coiled coil. Disordered stretches follow at residues 816–842 (ENKS…KRLR) and 1010–1035 (RQDE…RESQ). The residue at position 1020 (serine 1020) is a Phosphoserine. A compositionally biased stretch (basic and acidic residues) spans 1026-1035 (EDNKWERESQ). Serine 1387 carries the post-translational modification Phosphoserine. Residues 1390-1408 (RRRGNWITLKMRKLIKSKK) are phosphoinositide-binding. Residues 1407–1416 (KKDINRERQK) show a composition bias toward basic and acidic residues. Disordered stretches follow at residues 1407 to 1459 (KKDI…LGTK) and 1559 to 1601 (TTSF…SNNN). At serine 1417 the chain carries Phosphoserine; by PKB/AKT1. Polar residues-rich tracts occupy residues 1417–1430 (SLTL…SSEG), 1445–1459 (VGSN…LGTK), and 1559–1578 (TTSF…STGS). Residue threonine 1421 is modified to Phosphothreonine. Residues 1672–1702 (KTGSPGSEVVTLQQFLEESNKLTSVQIKSSS) carry the GBA motif. Phosphothreonine is present on threonine 1673. A Phosphoserine modification is found at serine 1675. Phosphoserine; by PKC/PRKCQ is present on serine 1690. The segment at 1713–1823 (SLSVSSDFLG…GTTRRTSIHD (111 aa)) is SH2-like; required for interaction with growth factor receptors. Serine 1717 bears the Phosphoserine mark. Positions 1736-1871 (SGKTPGDFYD…KSRSREQQSS (136 aa)) are disordered. The span at 1743–1763 (FYDRRTTKPEFLRPGPRKTED) shows a compositional bias: basic and acidic residues. Phosphotyrosine is present on residues tyrosine 1765 and tyrosine 1799. Polar residues-rich tracts occupy residues 1787-1799 (SSLS…SNPY) and 1807-1818 (SVISTAEGTTRR). Phosphoserine occurs at positions 1820 and 1837. Basic and acidic residues predominate over residues 1820-1830 (SIHDFLTKDSR). A compositionally biased stretch (low complexity) spans 1838 to 1851 (PPAAADSNTTAASN). A compositionally biased stretch (basic and acidic residues) spans 1854–1871 (KVQESRNSKSRSREQQSS).

It belongs to the CCDC88 family. In terms of assembly, homodimer. Interacts (via GBA motif) with guanine nucleotide-binding protein G(i) alpha subunits GNAI1, GNAI2 and GNAI3. Also interacts (via GNA motif) with guanine nucleotide-binding protein G(s) alpha subunit GNAS. Interaction with G(i) alpha subunits occurs before interaction with GNAS and is regulated by phosphorylation; phosphorylation at Ser-1675 enhances binding to G(i) alpha subunits while phosphorylation at Ser-1690 abolishes G(i) alpha subunit binding, promoting binding to GNAS. Interacts (via C-terminal SH2-like region) with growth factor receptors EGFR, INSR and KDR/VEGFR2 (via their autophosphorylated cytoplasmic tails). Forms a complex with EGFR and GNAI3 which leads to enhanced EGFR signaling and triggering of cell migration; ligand stimulation is required for recruitment of GNAI3 to the complex. Interacts (tyrosine-phosphorylated form) with phosphatidylinositol 3-kinase (PI3K) regulatory subunit PIK3R1/p85a (via SH2 domains); the interaction enables recruitment of PIK3R1 to the EGFR receptor, enhancing PI3K activity and cell migration. Interacts with serine/threonine-protein kinase PRKCQ; the interaction leads to phosphorylation of CCDC88A and inhibition of its guanine nucleotide exchange factor activity. Interacts (via C-terminus) with DISC1; the interaction is direct. Interacts with AKT proteins; the interaction is inhibited in the presence of DISC1. Interacts with AKT1/PKB (via C-terminus). The non-phosphorylated form interacts with phosphatidylinositol 4-phosphate [PI(4)P] and weakly with phosphatidylinositol 3-phosphate [PI(3)P]. Interacts with microtubules. Interacts with actin. Post-translationally, phosphorylation is induced by epidermal growth factor (EGF) in a phosphoinositide 3-kinase (PI3K)-dependent manner. Phosphorylation by AKT1/PKB is necessary for delocalization from the cell membrane and for cell migration. Phosphorylated on tyrosine residues which promotes binding to phosphatidylinositol 3-kinase (PI3K) regulatory subunit PIK3R1/p85a and enhances PI3K activity. Tyrosine-phosphorylated by both receptor and non-receptor tyrosine kinases in vitro. Tyrosine phosphorylation is required for AKT1-dependent phosphorylation of Ser-1417. Phosphorylation at Ser-1690 by PRKCQ disrupts interaction with GNAI3 and inhibits guanine nucleotide exchange factor activity. In terms of tissue distribution, expressed ubiquitously.

The protein resides in the cell membrane. Its subcellular location is the cytoplasm. The protein localises to the cytosol. It is found in the cytoplasmic vesicle. It localises to the cell projection. The protein resides in the lamellipodium. Its subcellular location is the cytoskeleton. The protein localises to the cilium basal body. It is found in the microtubule organizing center. It localises to the centrosome. The protein resides in the centriole. Its function is as follows. Bifunctional modulator of guanine nucleotide-binding proteins (G proteins). Acts as a non-receptor guanine nucleotide exchange factor which binds to and activates guanine nucleotide-binding protein G(i) alpha subunits. Also acts as a guanine nucleotide dissociation inhibitor for guanine nucleotide-binding protein G(s) subunit alpha GNAS. Essential for cell migration. Interacts in complex with G(i) alpha subunits with the EGFR receptor, retaining EGFR at the cell membrane following ligand stimulation and promoting EGFR signaling which triggers cell migration. Binding to Gi-alpha subunits displaces the beta and gamma subunits from the heterotrimeric G-protein complex which enhances phosphoinositide 3-kinase (PI3K)-dependent phosphorylation and kinase activity of AKT1/PKB. Phosphorylation of AKT1/PKB induces the phosphorylation of downstream effectors GSK3 and FOXO1/FKHR, and regulates DNA replication and cell proliferation. Binds in its tyrosine-phosphorylated form to the phosphatidylinositol 3-kinase (PI3K) regulatory subunit PIK3R1 which enables recruitment of PIK3R1 to the EGFR receptor, enhancing PI3K activity and cell migration. Plays a role as a key modulator of the AKT-mTOR signaling pathway, controlling the tempo of the process of newborn neuron integration during adult neurogenesis, including correct neuron positioning, dendritic development and synapse formation. Inhibition of G(s) subunit alpha GNAS leads to reduced cellular levels of cAMP and suppression of cell proliferation. Essential for the integrity of the actin cytoskeleton. Required for formation of actin stress fibers and lamellipodia. May be involved in membrane sorting in the early endosome. Plays a role in ciliogenesis and cilium morphology and positioning and this may partly be through regulation of the localization of scaffolding protein CROCC/Rootletin. The polypeptide is Girdin (CCDC88A) (Homo sapiens (Human)).